The primary structure comprises 117 residues: Cuticle protein CP1246 (117 aa).

Repeat copies occupy residues 1–17 (NYGE…LVQF), 26–43 (AEIG…HVQF), 67–84 (QSYG…NRQF), and 93–110 (VLVG…NVQF).

Calcified shell.

In Cancer pagurus (Rock crab), this protein is Cuticle protein CP1246.